The primary structure comprises 250 residues: tRNA (guanine-N(7)-)-methyltransferase (250 aa).

Residues 1–10 (MTPDDPRDAS) are compositionally biased toward basic and acidic residues. The tract at residues 1 to 30 (MTPDDPRDASDASLADATADSASRGHGSFF) is disordered. A compositionally biased stretch (low complexity) spans 11 to 24 (DASLADATADSASR). S-adenosyl-L-methionine-binding residues include glutamate 79, glutamate 104, aspartate 131, and aspartate 153. Residue aspartate 153 is part of the active site. Positions 157 and 189 each coordinate substrate.

It belongs to the class I-like SAM-binding methyltransferase superfamily. TrmB family.

It catalyses the reaction guanosine(46) in tRNA + S-adenosyl-L-methionine = N(7)-methylguanosine(46) in tRNA + S-adenosyl-L-homocysteine. The protein operates within tRNA modification; N(7)-methylguanine-tRNA biosynthesis. In terms of biological role, catalyzes the formation of N(7)-methylguanine at position 46 (m7G46) in tRNA. The sequence is that of tRNA (guanine-N(7)-)-methyltransferase from Rhodopseudomonas palustris (strain BisA53).